We begin with the raw amino-acid sequence, 915 residues long: WD repeat-containing protein 44 (915 aa).

The segment covering 1 to 14 (MASESDTEEFYDAP) has biased composition (acidic residues). The tract at residues 1–24 (MASESDTEEFYDAPEDVHLGTGYP) is disordered. Alanine 2 is modified (N-acetylalanine). The interval 2 to 173 (ASESDTEEFY…SSGEQLDASG (172 aa)) is binding activity. Serine 3 carries the post-translational modification Phosphoserine. The short motif at 9–15 (EFYDAPE) is the FFAT-like motif element. Tyrosine 11 carries the phosphotyrosine modification. 6 positions are modified to phosphoserine: serine 27, serine 50, serine 66, serine 71, serine 81, and serine 126. Disordered regions lie at residues 79 to 102 (DDSLDSKGKGLSDEATAGPSVAGT), 117 to 174 (LQQD…ASGL), and 208 to 282 (VEEV…PKEN). Positions 114-139 (EHELQQDSEKAESQNVAEESELETQK) form a coiled coil. Positions 146-155 (TCEKSEKTVD) are enriched in basic and acidic residues. Phosphothreonine is present on residues threonine 161 and threonine 221. The interval 213-259 (PAKPPRHLTPEPDIVASTKKPVPARPPPPTNFPPPRPPPPSRPAPPP) is important for interaction with ARHGAP26 AND ARHGAP10. Residues 235 to 258 (PARPPPPTNFPPPRPPPPSRPAPP) are compositionally biased toward pro residues. Serine 264 is subject to Phosphoserine. Positions 264 to 280 (SELEFEALKTPDLDVPK) are enriched in basic and acidic residues. Residue threonine 273 is modified to Phosphothreonine. The segment at 336 to 349 (VMGPQRPRSNSGRE) is important for interaction with RAB11A. Residues serine 344 and serine 346 each carry the phosphoserine modification. 2 positions are modified to phosphothreonine: threonine 351 and threonine 403. 2 disordered regions span residues 399-425 (SNDATQSDDEEKLQSQQTDTDGGRLKQ) and 461-481 (DEVFHTDQDDPSSSDDEGMPY). Phosphoserine is present on residues serine 405, serine 472, serine 473, and serine 474. Residues 469–478 (DDPSSSDDEG) show a composition bias toward acidic residues. Tyrosine 481 carries the post-translational modification Phosphotyrosine. Residues 511–550 (EHMGAVWTMKFSHCGRLLASAGQDNIVRIWALKNAFDYFN) form a WD 1 repeat. A disordered region spans residues 559-593 (EGRVSPSPSQESLSSSKSDTDMGVCSGTDEDPDDK). 2 positions are modified to phosphoserine: serine 563 and serine 567. A compositionally biased stretch (low complexity) spans 563 to 575 (SPSPSQESLSSSK). WD repeat units lie at residues 607–645 (GHTADLLDLSWSKNYFLLSSSMDKTVRLWHISRRECLCC), 647–687 (QHID…VALW), 692–731 (GQTKLITAANFCQNGKYAVIGTYDGRCIFYDTEHLKYHTQ), 742–781 (KVGRKITGIEPLPGENKILVTSNDSRIRLYDLRDLSLSMK), 786–825 (VNSSSQIKASFSHDFTYLVSGSEDKYVYIWSTYHDLSKFT), 840–880 (AHNA…EVLD), and 882–915 (TSTGIVKTDNTEVLLSADFTGAIKVFINKRKTVS).

Interacts with the GTP-bound form of RAB11 when membrane-associated. Interacts with GRAF1/ARHGAP26 or GRAF2/ARHGAP10; the interaction connects the endoplasmic reticulum (ER) with the endosomal tubule. Interacts (via FFAT-like motif) with VAPA (via MSP domain) or VAPB (via MSP domain); the interaction connects the ER with the endosomal tubule. Does not bind to other Rab and Rho small G proteins. In terms of processing, phosphorylated by ATK1; the phosphorylation stabilizes its interaction with RAB11A and RAB11B.

Its subcellular location is the cytoplasm. It localises to the cytosol. The protein localises to the perinuclear region. It is found in the endosome membrane. The protein resides in the golgi apparatus. Its subcellular location is the trans-Golgi network. Downstream effector for Rab11 which regulates Rab11 intracellular membrane trafficking functions such as endocytic recycling, intracellular ciliogenesis and protein export. ATK1-mediated phosphorylation of WDR44 induces binding to Rab11 which activates endocytic recycling of transferrin receptor back to the plasma membrane. When bound to Rab11, prevents the formation of the ciliogenic Rab11-Rabin8/RAB3IP-RAB11FIP3 complex, therefore inhibiting preciliary trafficking and ciliogenesis. Participates in neo-synthesized protein export by connecting the endoplasmic reticulum (ER) with the endosomal tubule via direct interactions with the integral ER proteins VAPA or VAPB and the endosomal protein GRAFs (GRAF1/ARHGAP26 or GRAF2/ARHGAP10), which facilitates the transfer of proteins such as E-cadherin, MPP14 and CFTR into a Rab8-Rab10-Rab11-dependent export route. The chain is WD repeat-containing protein 44 from Mus musculus (Mouse).